Here is a 127-residue protein sequence, read N- to C-terminus: Large ribosomal subunit protein uL24 (127 aa).

The protein belongs to the universal ribosomal protein uL24 family. In terms of assembly, component of the large ribosomal subunit. Mature ribosomes consist of a small (40S) and a large (60S) subunit. The 40S subunit contains about 32 different proteins and 1 molecule of RNA (18S). The 60S subunit contains 45 different proteins and 3 molecules of RNA (25S, 5.8S and 5S).

The protein resides in the cytoplasm. In terms of biological role, component of the ribosome, a large ribonucleoprotein complex responsible for the synthesis of proteins in the cell. The small ribosomal subunit (SSU) binds messenger RNAs (mRNAs) and translates the encoded message by selecting cognate aminoacyl-transfer RNA (tRNA) molecules. The large subunit (LSU) contains the ribosomal catalytic site termed the peptidyl transferase center (PTC), which catalyzes the formation of peptide bonds, thereby polymerizing the amino acids delivered by tRNAs into a polypeptide chain. The nascent polypeptides leave the ribosome through a tunnel in the LSU and interact with protein factors that function in enzymatic processing, targeting, and the membrane insertion of nascent chains at the exit of the ribosomal tunnel. The polypeptide is Large ribosomal subunit protein uL24 (Candida albicans (strain SC5314 / ATCC MYA-2876) (Yeast)).